Reading from the N-terminus, the 296-residue chain is Phosphate transport system permease protein PstA (296 aa).

Residues 1-28 are Cytoplasmic-facing; that stretch reads MAMVEMQTTAALAESRRKMQARRRLKNR. The chain crosses the membrane as a helical span at residues 29 to 50; it reads IALTLSMATMAFGLFWLIWILM. Over 51–82 the chain is Periplasmic; that stretch reads STITRGIDGMSLALFTEMTPPPNTEGGGLANA. The helical transmembrane segment at 83–102 threads the bilayer; that stretch reads LAGSGLLILWATVFGTPLGI. The region spanning 83 to 286 is the ABC transmembrane type-1 domain; that stretch reads LAGSGLLILW…LCVLLLNILA (204 aa). Topologically, residues 103–126 are cytoplasmic; it reads MAGIYLAEYGRKSWLAEVIRFIND. Residues 127–146 form a helical membrane-spanning segment; it reads ILLSAPSIVVGLFVYTIVVA. The Periplasmic portion of the chain corresponds to 147-150; that stretch reads QMEH. A helical membrane pass occupies residues 151–169; sequence FSGWAGVIALALLQVPIVI. The Cytoplasmic portion of the chain corresponds to 170 to 204; the sequence is RTTENMLKLVPYSLREAAYALGTPKWKMISAITLK. A helical membrane pass occupies residues 205 to 223; it reads ASVSGIMTGILLAIARIAG. Over 224 to 266 the chain is Periplasmic; that stretch reads ETAPLLFTALSNQFWSTDMMQPIANLPVTIFKFAMSPFAEWQQ. Residues 267-286 form a helical membrane-spanning segment; that stretch reads LAWAGVLIITLCVLLLNILA. Residues 287 to 296 are Cytoplasmic-facing; sequence RVVFAKNKHG.

Belongs to the binding-protein-dependent transport system permease family. CysTW subfamily.

It is found in the cell inner membrane. Part of the binding-protein-dependent transport system for phosphate; probably responsible for the translocation of the substrate across the membrane. This is Phosphate transport system permease protein PstA (pstA) from Escherichia coli (strain K12).